The chain runs to 252 residues: NAD(P)H-quinone oxidoreductase subunit K (252 aa).

[4Fe-4S] cluster contacts are provided by Cys-73, Cys-74, Cys-138, and Cys-169. Residues 225 to 236 (ASTQKQALSPSQ) show a composition bias toward polar residues. A disordered region spans residues 225 to 252 (ASTQKQALSPSQEIPLEDQNEATKEIAQ).

This sequence belongs to the complex I 20 kDa subunit family. NDH-1 can be composed of about 15 different subunits; different subcomplexes with different compositions have been identified which probably have different functions. [4Fe-4S] cluster serves as cofactor.

It localises to the cellular thylakoid membrane. It catalyses the reaction a plastoquinone + NADH + (n+1) H(+)(in) = a plastoquinol + NAD(+) + n H(+)(out). The enzyme catalyses a plastoquinone + NADPH + (n+1) H(+)(in) = a plastoquinol + NADP(+) + n H(+)(out). Its function is as follows. NDH-1 shuttles electrons from an unknown electron donor, via FMN and iron-sulfur (Fe-S) centers, to quinones in the respiratory and/or the photosynthetic chain. The immediate electron acceptor for the enzyme in this species is believed to be plastoquinone. Couples the redox reaction to proton translocation, and thus conserves the redox energy in a proton gradient. Cyanobacterial NDH-1 also plays a role in inorganic carbon-concentration. This Prochlorococcus marinus (strain MIT 9211) protein is NAD(P)H-quinone oxidoreductase subunit K.